The sequence spans 427 residues: UPF0229 protein YeaH (427 aa).

Basic and acidic residues predominate over residues 79 to 90 (NDHFVQNDRIER). Residues 79 to 110 (NDHFVQNDRIERPQGGGGGSGSGQGQASQDGE) form a disordered region. Over residues 92-102 (QGGGGGSGSGQ) the composition is skewed to gly residues.

This sequence belongs to the UPF0229 family.

The polypeptide is UPF0229 protein YeaH (Shigella boydii serotype 18 (strain CDC 3083-94 / BS512)).